The sequence spans 32 residues: Zinc metalloproteinase/disintegrin-like CdtV1 (32 aa).

Disulfide bonds link Cys5–Cys14 and Cys7–Cys15.

This sequence belongs to the venom metalloproteinase (M12B) family. P-II subfamily. P-IIa sub-subfamily. In terms of assembly, monomer. In terms of tissue distribution, expressed by the venom gland.

It is found in the secreted. In terms of biological role, snake venom metalloproteinase that impairs hemostasis in the envenomed animal. The protein is Zinc metalloproteinase/disintegrin-like CdtV1 of Crotalus durissus terrificus (South American rattlesnake).